A 1028-amino-acid chain; its full sequence is GPI inositol-deacylase (1028 aa).

Residues 51–71 (VFGLGLLLFCIVCMAYLSPFL) form a helical membrane-spanning segment. An N-linked (GlcNAc...) asparagine glycan is attached at N166. S231 is an active-site residue. Residues N299, N530, N586, and N679 are each glycosylated (N-linked (GlcNAc...) asparagine). The next 8 membrane-spanning stretches (helical) occupy residues 699 to 719 (LAVA…QFAL), 740 to 760 (FWLK…ISFI), 799 to 819 (WIGP…AFGI), 867 to 887 (IMIL…LLFL), 915 to 935 (SYLL…FVFL), 948 to 968 (SHHN…NAGL), 979 to 999 (ISKL…VIYG), and 1002 to 1022 (NLFW…FTSL).

Belongs to the GPI inositol-deacylase family.

The protein resides in the endoplasmic reticulum membrane. Its function is as follows. Involved in inositol deacylation of GPI-anchored proteins which plays important roles in the quality control and ER-associated degradation of GPI-anchored proteins. This is GPI inositol-deacylase (BST1) from Eremothecium gossypii (strain ATCC 10895 / CBS 109.51 / FGSC 9923 / NRRL Y-1056) (Yeast).